The sequence spans 241 residues: tRNA (guanine-N(1)-)-methyltransferase (241 aa).

S-adenosyl-L-methionine-binding positions include G112 and 131–136; that span reads LGDFVL.

This sequence belongs to the RNA methyltransferase TrmD family. As to quaternary structure, homodimer.

It localises to the cytoplasm. The enzyme catalyses guanosine(37) in tRNA + S-adenosyl-L-methionine = N(1)-methylguanosine(37) in tRNA + S-adenosyl-L-homocysteine + H(+). Functionally, specifically methylates guanosine-37 in various tRNAs. The chain is tRNA (guanine-N(1)-)-methyltransferase from Clostridium novyi (strain NT).